Consider the following 70-residue polypeptide: Acyl carrier protein (70 aa).

The Carrier domain maps to 2–70 (SDIADRVKKI…ETIQTFGDAP (69 aa)). At Ser-37 the chain carries O-(pantetheine 4'-phosphoryl)serine.

It belongs to the acyl carrier protein (ACP) family. In terms of processing, 4'-phosphopantetheine is transferred from CoA to a specific serine of apo-ACP by AcpS. This modification is essential for activity because fatty acids are bound in thioester linkage to the sulfhydryl of the prosthetic group.

The protein localises to the cytoplasm. It functions in the pathway lipid metabolism; fatty acid biosynthesis. Functionally, carrier of the growing fatty acid chain in fatty acid biosynthesis. This chain is Acyl carrier protein, found in Cereibacter sphaeroides (Rhodobacter sphaeroides).